We begin with the raw amino-acid sequence, 711 residues long: Polyribonucleotide nucleotidyltransferase (711 aa).

2 residues coordinate Mg(2+): Asp486 and Asp492. The KH domain maps to 553 to 612 (PRIHTIKINPDKIKDVIGKGGSVIRALTEETGTTIEIEDDGTVKIAATDGDKAQHAIRRI). In terms of domain architecture, S1 motif spans 622–690 (GRIYNGKVTR…RQGRVRLSIK (69 aa)). A disordered region spans residues 689–711 (IKEATEQTPSAAAPEAPAAEQGE). Over residues 694-711 (EQTPSAAAPEAPAAEQGE) the composition is skewed to low complexity.

This sequence belongs to the polyribonucleotide nucleotidyltransferase family. As to quaternary structure, component of the RNA degradosome, which is a multiprotein complex involved in RNA processing and mRNA degradation. Mg(2+) is required as a cofactor.

It is found in the cytoplasm. It catalyses the reaction RNA(n+1) + phosphate = RNA(n) + a ribonucleoside 5'-diphosphate. Involved in mRNA degradation. Catalyzes the phosphorolysis of single-stranded polyribonucleotides processively in the 3'- to 5'-direction. This Klebsiella pneumoniae subsp. pneumoniae (strain ATCC 700721 / MGH 78578) protein is Polyribonucleotide nucleotidyltransferase.